Consider the following 792-residue polypeptide: Ribonucleoside-diphosphate reductase large subunit (792 aa).

Substrate is bound by residues Thr200, 215–216, Gly246, 415–419, and 606–610; these read SC, NLCAE, and PTAGT. Cys216 and Cys431 are joined by a disulfide. The Proton acceptor role is filled by Asn415. The active-site Cysteine radical intermediate is Cys417. Glu419 acts as the Proton acceptor in catalysis. Residues 758 to 781 form a disordered region; the sequence is SPPHSGMKQDGAWLPGPKNPEEES.

This sequence belongs to the ribonucleoside diphosphate reductase large chain family. In terms of assembly, heterotetramer composed of a homodimer of the large subunit (R1) and a homodimer of the small subunit (R2). Larger multisubunit protein complex are also active, composed of (R1)n(R2)n.

The catalysed reaction is a 2'-deoxyribonucleoside 5'-diphosphate + [thioredoxin]-disulfide + H2O = a ribonucleoside 5'-diphosphate + [thioredoxin]-dithiol. Its function is as follows. Ribonucleoside-diphosphate reductase holoenzyme provides the precursors necessary for viral DNA synthesis. Allows virus growth in non-dividing cells, as well as reactivation from latency in infected hosts. Catalyzes the biosynthesis of deoxyribonucleotides from the corresponding ribonucleotides. The polypeptide is Ribonucleoside-diphosphate reductase large subunit (Human herpesvirus 8 type P (isolate GK18) (HHV-8)).